Reading from the N-terminus, the 213-residue chain is Glycerol-3-phosphate acyltransferase (213 aa).

6 helical membrane-spanning segments follow: residues 2-22, 52-74, 81-100, 112-132, 143-163, and 164-184; these read ITIV…GLWI, AGMA…PIIF, PLIF…FAGF, VIFG…FGAL, VTAS…GFIL, and SNYD…IIIR.

This sequence belongs to the PlsY family. In terms of assembly, probably interacts with PlsX.

The protein resides in the cell membrane. It catalyses the reaction an acyl phosphate + sn-glycerol 3-phosphate = a 1-acyl-sn-glycero-3-phosphate + phosphate. It participates in lipid metabolism; phospholipid metabolism. In terms of biological role, catalyzes the transfer of an acyl group from acyl-phosphate (acyl-PO(4)) to glycerol-3-phosphate (G3P) to form lysophosphatidic acid (LPA). This enzyme utilizes acyl-phosphate as fatty acyl donor, but not acyl-CoA or acyl-ACP. The chain is Glycerol-3-phosphate acyltransferase from Streptococcus pneumoniae (strain Hungary19A-6).